Reading from the N-terminus, the 209-residue chain is CAAX box protein 1 (209 aa).

A disordered region spans residues T182–A209. C206 bears the Cysteine methyl ester mark. C206 is lipidated: S-farnesyl cysteine. Positions V207–A209 are cleaved as a propeptide — removed in mature form.

In terms of tissue distribution, ubiquitous.

It localises to the cell membrane. This chain is CAAX box protein 1, found in Homo sapiens (Human).